The sequence spans 338 residues: Eukaryotic translation initiation factor 3 subunit H (338 aa).

The MPN domain maps to 22–154; it reads VQCDGLAVMK…LKAYRLTPQA (133 aa).

This sequence belongs to the eIF-3 subunit H family. As to quaternary structure, component of the eukaryotic translation initiation factor 3 (eIF-3) complex. The eIF-3 complex interacts with pix. Interacts with mxt.

It localises to the cytoplasm. Functionally, component of the eukaryotic translation initiation factor 3 (eIF-3) complex, which is involved in protein synthesis of a specialized repertoire of mRNAs and, together with other initiation factors, stimulates binding of mRNA and methionyl-tRNAi to the 40S ribosome. The eIF-3 complex specifically targets and initiates translation of a subset of mRNAs involved in cell proliferation. This chain is Eukaryotic translation initiation factor 3 subunit H, found in Drosophila erecta (Fruit fly).